Reading from the N-terminus, the 142-residue chain is Small ribosomal subunit protein uS12 (142 aa).

The disordered stretch occupies residues 1 to 30; the sequence is MGKTHGMGAARKLKSHRRTQRWADKSYKKS. Basic residues predominate over residues 11–20; sequence RKLKSHRRTQ. Residues 21 to 30 are compositionally biased toward basic and acidic residues; that stretch reads RWADKSYKKS. Pro61 is subject to Hydroxyproline.

It belongs to the universal ribosomal protein uS12 family.

The sequence is that of Small ribosomal subunit protein uS12 (RPS23) from Euphorbia esula (Leafy spurge).